The chain runs to 2500 residues: Non-reducing polyketide synthase atr1 (2500 aa).

An N-terminal acylcarrier protein transacylase domain (SAT) region spans residues V13 to L260. The Ketosynthase family 3 (KS3) domain occupies T385 to Q808. Active-site for beta-ketoacyl synthase activity residues include C557, H692, and H731. Residues M908–D1199 are malonyl-CoA:ACP transacylase (MAT) domain. S995 acts as the For acyl/malonyl transferase activity in catalysis. An N-terminal hotdog fold region spans residues P1286 to Q1413. Residues P1286–E1584 form the PKS/mFAS DH domain. The tract at residues R1287–L1583 is product template (PT) domain. H1317 acts as the Proton acceptor; for dehydratase activity in catalysis. The tract at residues S1433–E1584 is C-terminal hotdog fold. The active-site Proton donor; for dehydratase activity is the D1495. The interval A1594 to N1649 is disordered. Residues S1602–T1617 are compositionally biased toward low complexity. The region spanning N1649 to K1725 is the Carrier domain. An O-(pantetheine 4'-phosphoryl)serine modification is found at S1683. Positions K2164 to R2496 are thioesterase (TE) domain. Residues S2285 and D2434 each act as for thioesterase activity in the active site.

It carries out the reaction 6 malonyl-CoA + 2 acetyl-CoA + 2 S-adenosyl-L-methionine + 3 H(+) = 4-O-demethylbarbatate + 2 S-adenosyl-L-homocysteine + 6 CO2 + 8 CoA + H2O. The protein operates within secondary metabolite biosynthesis; terpenoid biosynthesis. In terms of biological role, non-reducing polyketide synthase; part of the gene cluster that mediates the biosynthesis of atranorin, a depside of polyketide origin that accumulates in the cortical or medullary layers of lichen thalli. The first step in the pathway is performed by the non-reducing polyketide synthase atr1 that produces 4-O-demethylbarbatic acid composed of two 3-methylorsellinic acid (3MOA) moieties from S-adenosyl-L-methionine (SAM), acetyl-CoA and malonyl-CoA units. The pathway continues with the actions of the cytochrome P450 monooygenase atr2 that catalizes the oxidation of c-9 and the O-methyltransferase atr3 that performs the methylation of the carboxyl group to yield atranorin, via the proatranorin II and III intermediates if atr2 acts first, or the proatranorin I intermediate if atr3 acts first. The polypeptide is Non-reducing polyketide synthase atr1 (Stereocaulon alpinum (Alpine snow lichen)).